The sequence spans 140 residues: uncharacterized protein (140 aa).

The next 3 helical transmembrane spans lie at 20-42, 88-110, and 115-137; these read ILYYGGLIGIIFMAITFAIYVSG, FVALAFLAMITIICYLAIIPVLL, and IIYTILAIAEVIILLLAASGLLQ.

Its subcellular location is the cell membrane. This is an uncharacterized protein from Archaeoglobus fulgidus (strain ATCC 49558 / DSM 4304 / JCM 9628 / NBRC 100126 / VC-16).